Consider the following 388-residue polypeptide: Succinate--CoA ligase [ADP-forming] subunit beta (388 aa).

Residues K9–H244 form the ATP-grasp domain. ATP-binding positions include K46, G53–G55, E99, T102, and E107. Positions 199 and 213 each coordinate Mg(2+). Residues N264 and G321–V323 each bind substrate.

The protein belongs to the succinate/malate CoA ligase beta subunit family. As to quaternary structure, heterotetramer of two alpha and two beta subunits. Mg(2+) serves as cofactor.

It carries out the reaction succinate + ATP + CoA = succinyl-CoA + ADP + phosphate. It catalyses the reaction GTP + succinate + CoA = succinyl-CoA + GDP + phosphate. It participates in carbohydrate metabolism; tricarboxylic acid cycle; succinate from succinyl-CoA (ligase route): step 1/1. Succinyl-CoA synthetase functions in the citric acid cycle (TCA), coupling the hydrolysis of succinyl-CoA to the synthesis of either ATP or GTP and thus represents the only step of substrate-level phosphorylation in the TCA. The beta subunit provides nucleotide specificity of the enzyme and binds the substrate succinate, while the binding sites for coenzyme A and phosphate are found in the alpha subunit. In Shewanella baltica (strain OS195), this protein is Succinate--CoA ligase [ADP-forming] subunit beta.